The chain runs to 383 residues: tRNA-specific 2-thiouridylase MnmA (383 aa).

ATP is bound by residues 9-16 (GMSGGVDS) and M35. Residues 95 to 97 (NPD) are interaction with target base in tRNA. C100 functions as the Nucleophile in the catalytic mechanism. C100 and C196 are disulfide-bonded. G124 is an ATP binding site. The tract at residues 146 to 148 (KDQ) is interaction with tRNA. The active-site Cysteine persulfide intermediate is the C196. Positions 308-309 (RY) are interaction with tRNA.

It belongs to the MnmA/TRMU family.

Its subcellular location is the cytoplasm. It carries out the reaction S-sulfanyl-L-cysteinyl-[protein] + uridine(34) in tRNA + AH2 + ATP = 2-thiouridine(34) in tRNA + L-cysteinyl-[protein] + A + AMP + diphosphate + H(+). Its function is as follows. Catalyzes the 2-thiolation of uridine at the wobble position (U34) of tRNA, leading to the formation of s(2)U34. The sequence is that of tRNA-specific 2-thiouridylase MnmA from Burkholderia lata (strain ATCC 17760 / DSM 23089 / LMG 22485 / NCIMB 9086 / R18194 / 383).